Reading from the N-terminus, the 222-residue chain is Peptide methionine sulfoxide reductase MsrA 1 (222 aa).

Cys57 is an active-site residue.

Belongs to the MsrA Met sulfoxide reductase family.

It carries out the reaction L-methionyl-[protein] + [thioredoxin]-disulfide + H2O = L-methionyl-(S)-S-oxide-[protein] + [thioredoxin]-dithiol. It catalyses the reaction [thioredoxin]-disulfide + L-methionine + H2O = L-methionine (S)-S-oxide + [thioredoxin]-dithiol. Has an important function as a repair enzyme for proteins that have been inactivated by oxidation. Catalyzes the reversible oxidation-reduction of methionine sulfoxide in proteins to methionine. The polypeptide is Peptide methionine sulfoxide reductase MsrA 1 (msrA1) (Synechocystis sp. (strain ATCC 27184 / PCC 6803 / Kazusa)).